We begin with the raw amino-acid sequence, 100 residues long: Large ribosomal subunit protein uL23 (100 aa).

This sequence belongs to the universal ribosomal protein uL23 family. Part of the 50S ribosomal subunit. Contacts protein L29, and trigger factor when it is bound to the ribosome.

In terms of biological role, one of the early assembly proteins it binds 23S rRNA. One of the proteins that surrounds the polypeptide exit tunnel on the outside of the ribosome. Forms the main docking site for trigger factor binding to the ribosome. This is Large ribosomal subunit protein uL23 from Rippkaea orientalis (strain PCC 8801 / RF-1) (Cyanothece sp. (strain PCC 8801)).